The primary structure comprises 594 residues: 4-alpha-glucanotransferase DPE1, chloroplastic/amyloplastic (594 aa).

The transit peptide at 1 to 37 directs the protein to the chloroplast; it reads MATLSLPLPHLTQAIPARARPRPRPLRGIPARLLSCR.

Belongs to the disproportionating enzyme family.

It localises to the plastid. It is found in the chloroplast. The protein localises to the amyloplast. It catalyses the reaction Transfers a segment of a (1-&gt;4)-alpha-D-glucan to a new position in an acceptor, which may be glucose or a (1-&gt;4)-alpha-D-glucan.. Chloroplastic alpha-glucanotransferase involved in maltotriose metabolism. The chain is 4-alpha-glucanotransferase DPE1, chloroplastic/amyloplastic (DPE1) from Oryza sativa subsp. japonica (Rice).